Reading from the N-terminus, the 491-residue chain is Sucrose transport protein SUC9 (491 aa).

Residues 1-12 (MSDIQAKEDAAP) show a composition bias toward basic and acidic residues. The tract at residues 1-26 (MSDIQAKEDAAPVDRQSSSSVVVPDE) is disordered. Over 1–33 (MSDIQAKEDAAPVDRQSSSSVVVPDEPSPLRKM) the chain is Cytoplasmic. At Ser-17 the chain carries Phosphoserine. A helical transmembrane segment spans residues 34–54 (ISVASIAAGIQFGWALQLSLL). Residues 55-68 (TPYVQLLGVPHKWS) are Extracellular-facing. The chain crosses the membrane as a helical span at residues 69–89 (SFIWLCGPISGLLVQPTVGYF). Residues 90–101 (SDRCKSRFGRRR) lie on the Cytoplasmic side of the membrane. Residues 102-122 (PFIATGALLVALAVILIGFAA) form a helical membrane-spanning segment. Over 123-139 (DFGHTMGDKLDEAVKIR) the chain is Extracellular. A helical transmembrane segment spans residues 140–160 (AVGFFVVGFWILDVANNTLQG). The Cytoplasmic segment spans residues 161-181 (PCRAFLGDLAAGDAKKTRTAN). Residues 182-202 (AIFSFFMAVGNVLGYAAGSYT) form a helical membrane-spanning segment. Topologically, residues 203 to 224 (NLHKIFPFTVTKACDIYCANLK) are extracellular. Residues 225 to 245 (SCFIISITLLIVLTIIALWYV) traverse the membrane as a helical segment. Residues 246 to 277 (EDKQWSPNADSDNEKTPFFGEIFGAFKVMKRP) are Cytoplasmic-facing. Residues 278-298 (MWMLLAVTALNWIAWFPFLLY) form a helical membrane-spanning segment. Residues 299-329 (DTDWMGREVYGGDSAGDDKMKKLYNHGIQVG) lie on the Extracellular side of the membrane. Residues 330–350 (SLGLMLNSIVLGVMSLVIGVI) form a helical membrane-spanning segment. The Cytoplasmic portion of the chain corresponds to 351–358 (SKKIGAKR). The chain crosses the membrane as a helical span at residues 359–379 (LWGAVNIILAVCLAMTVLVTK). Residues 380-406 (KAEEHRKIAGRMALPTNAIRDGALSLF) are Extracellular-facing. Residues 407 to 427 (AILGIPLAITFSIPFALASII) traverse the membrane as a helical segment. The Cytoplasmic portion of the chain corresponds to 428–443 (SSSSGAGQGLSLGVLN). A helical membrane pass occupies residues 444 to 464 (MAIVIPQMIVSFGVGPIDALF). The Extracellular segment spans residues 465–468 (GGGN). A helical membrane pass occupies residues 469 to 489 (LPGFVVGAIAALISSVVALTV). Over 490–491 (LP) the chain is Cytoplasmic.

Belongs to the glycoside-pentoside-hexuronide (GPH) cation symporter transporter (TC 2.A.2.4) family. Widely expressed.

It localises to the cell membrane. The catalysed reaction is sucrose(out) + H(+)(out) = sucrose(in) + H(+)(in). It participates in glycan biosynthesis; sucrose metabolism. Its activity is regulated as follows. Inhibited by protonophores (e.g. carbonyl cyanide m-chlorophenyl-hydrazone (CCCP)) and SH group inhibitors (e.g. p-chloromercuribenzene sulphonic acid (PCMBS)). High-affinity sucrose transporter. Responsible for the transport of sucrose into the cell, with the concomitant uptake of protons (symport system). Can also transport a wide range of glucosides, such as helicin, salicin, arbutin, maltose, fraxin, esculin, uranose, alpha-methylglucoside, alpha-phenylglucoside and beta-phenylglucoside. Plays a role in flowering time transition delay. The protein is Sucrose transport protein SUC9 of Arabidopsis thaliana (Mouse-ear cress).